The sequence spans 175 residues: Ribosome maturation factor RimM (175 aa).

Positions 97–175 (EGEFYWHQLE…RMVVDWDPEF (79 aa)) constitute a PRC barrel domain.

The protein belongs to the RimM family. In terms of assembly, binds ribosomal protein uS19.

The protein resides in the cytoplasm. An accessory protein needed during the final step in the assembly of 30S ribosomal subunit, possibly for assembly of the head region. Essential for efficient processing of 16S rRNA. May be needed both before and after RbfA during the maturation of 16S rRNA. It has affinity for free ribosomal 30S subunits but not for 70S ribosomes. In Marinobacter nauticus (strain ATCC 700491 / DSM 11845 / VT8) (Marinobacter aquaeolei), this protein is Ribosome maturation factor RimM.